Reading from the N-terminus, the 397-residue chain is Efflux pump periplasmic linker BepD (397 aa).

The first 26 residues, 1-26 (MTLNRTIRCFAAGAAFIVFAAQPALA), serve as a signal peptide directing secretion. The stretch at 98–139 (APYQAELEKAQAQVAQAEAQYQQSIRDAERAEQLVQQKVQSA) forms a coiled coil.

This sequence belongs to the membrane fusion protein (MFP) (TC 8.A.1) family. In terms of assembly, probably part of a tripartite efflux pump, which is composed of an outer membrane efflux protein, an inner membrane protein and a protein that expands the periplasmic space. Could form a tripartite pump with BepC and BepE.

It localises to the periplasm. Involved in resistance to several unrelated toxic compounds, such as dyes, detergents and antibiotics. In Brucella suis biovar 1 (strain 1330), this protein is Efflux pump periplasmic linker BepD (bepD).